Consider the following 531-residue polypeptide: Transmembrane protein 266 (531 aa).

The Cytoplasmic segment spans residues 1–102; it reads MALAASFNMT…VFLLSASLNS (102 aa). Residues 103-123 form a helical membrane-spanning segment; it reads FLVACVILVVILLTLELLIDI. The Extracellular segment spans residues 124 to 129; the sequence is KLLQFS. The helical transmembrane segment at 130–150 threads the bilayer; that stretch reads SAFQFAGVIHWISLVILSVFF. The Cytoplasmic portion of the chain corresponds to 151-169; the sequence is SETVLRIVVLGIWDYIENK. A helical transmembrane segment spans residues 170-190; the sequence is IEVFDGAVIILSLAPMVASTV. Topologically, residues 191–199 are extracellular; that stretch reads ANGPRSPWD. Residues 200–220 traverse the membrane as a helical segment; that stretch reads AISLIIMLRIWRVKRVIDAYV. Residues 221–531 lie on the Cytoplasmic side of the membrane; the sequence is LPVKLEMEMV…EQKLHRVPEA (311 aa). Residues 231–251 adopt a coiled-coil conformation; it reads IQQYEKAKVIQDEQLERLTQI. The disordered stretch occupies residues 380–477; sequence NGTGATSESA…PAGSAQTSPE (98 aa). Polar residues predominate over residues 383–412; the sequence is GATSESASRSSVTRAQSDSSQTLGSSTDCS. A compositionally biased stretch (pro residues) spans 421–431; the sequence is EPGPSPLPLPP.

In terms of assembly, homodimer; disulfide-linked.

Its subcellular location is the cell membrane. The protein resides in the cell projection. It is found in the dendrite. The protein localises to the perikaryon. Voltage-sensor protein present on the post-synaptic side of glutamatergic mossy fibers and granule cells in the cerebellum. Despite the presence of a voltage-sensor segment, does not form a functional ion channel and its precise role remains unclear. Undergoes both rapid and slow structural rearrangements in response to changes in voltage. Contains a zinc-binding site that can regulate the slow conformational transition. The protein is Transmembrane protein 266 of Macaca fascicularis (Crab-eating macaque).